The chain runs to 947 residues: Nonribosomal peptide synthetase ucdA (947 aa).

The tract at residues 25–413 (YSPHANAGYC…AGPVVFKEYF (389 aa)) is adenylation (A) domain. The region spanning 585-665 (APENEFERDL…DLGTALRKLQ (81 aa)) is the Carrier domain. Ser-623 is modified (O-(pantetheine 4'-phosphoryl)serine). Residues 684-934 (PLWLVHPGVG…MLSPEHVFDF (251 aa)) form a thioesterase (TE) domain region.

This sequence belongs to the NRP synthetase family.

It catalyses the reaction 2 3-(4-hydroxyphenyl)pyruvate + 2 ATP = atromentin + 2 AMP + 2 diphosphate + H(+). Its pathway is secondary metabolite biosynthesis. In terms of biological role, nonribosomal peptide synthetase that mediates the biosynthesis of usterphenyllins and uscandidusins, p-terphenyl derivatives. Within the pathway, ucdA condenses two 4-hydroxyphenylpyruvate (HPPA) units to produce atromentin. UcdA first activates HPPA through its A domain to AMP-HPPA. The HPPA unit is then loaded to the T domain and eventually transferred to the TE domain. Another HPPA unit is then loaded onto the T domain. The TE domain then catalyzes the condensation of the two HPPA units and the release of atromentin via cyclization. The pathway begin with the biosynthesis of 4-hydroxyphenylpyruvate (HPPA) from L-tyrosine, possibly by the aminotransferase ucdG. The nonribosomal peptide synthetase ucdA then condenses two HPPA units to produce atromentin. The key step in this pathway is the reduction and dehydration of atromentin to form a terphenyl triol intermediate, performed by the NAD-dependent dehydrogenase ucdB. Further O-methylation by the methyltransferase ucdC forms terphenyllin carrying two methoxy moieties at C-9 and C-12, and subsequent dihydroxylation at C-3 of ring A and C-15 of ring C by the flavin-dependent oxygenase ucdD leads to 3,15-dihydroxyterphenyllin. Prenylation by ucdE at position C-5 of ring A forms usterphenyllin B, and is followed by a second prenylation at position C-14 of ring C to form usterphenyllin A. The following furan ring formation that leads to uscandidusins A and B was proven to be an unexpected spontaneous non-enzymatic reaction. In Aspergillus ustus, this protein is Nonribosomal peptide synthetase ucdA.